A 183-amino-acid chain; its full sequence is Large ribosomal subunit protein uL18 (183 aa).

The protein belongs to the universal ribosomal protein uL18 family. In terms of assembly, part of the 50S ribosomal subunit. Contacts the 5S and 23S rRNAs.

In terms of biological role, this is one of the proteins that bind and probably mediate the attachment of the 5S RNA into the large ribosomal subunit, where it forms part of the central protuberance. In Halobacterium salinarum (strain ATCC 29341 / DSM 671 / R1), this protein is Large ribosomal subunit protein uL18.